Here is a 187-residue protein sequence, read N- to C-terminus: Ribosome-recycling factor (187 aa).

The protein belongs to the RRF family.

The protein localises to the cytoplasm. Functionally, responsible for the release of ribosomes from messenger RNA at the termination of protein biosynthesis. May increase the efficiency of translation by recycling ribosomes from one round of translation to another. The chain is Ribosome-recycling factor from Ligilactobacillus salivarius (strain UCC118) (Lactobacillus salivarius).